Here is a 559-residue protein sequence, read N- to C-terminus: Putative helicase 22 (559 aa).

The region spanning 186-347 (VSDVNVIGNG…EIMGLLGKIS (162 aa)) is the Helicase ATP-binding domain. Residue 199-206 (APTGSGKS) participates in ATP binding. Positions 300–303 (DEAH) match the DEAH box motif. One can recognise a Helicase C-terminal domain in the interval 410–552 (TNKQIISKIK…KMNFIENEYN (143 aa)).

This Sulfolobus islandicus filamentous virus (isolate Iceland/Hveragerdi) (SIFV) protein is Putative helicase 22 (SIFV0022).